A 280-amino-acid polypeptide reads, in one-letter code: Ribosomal RNA small subunit methyltransferase A (280 aa).

The S-adenosyl-L-methionine site is built by His-15, Leu-17, Gly-42, Glu-64, Asp-89, and Asn-109.

Belongs to the class I-like SAM-binding methyltransferase superfamily. rRNA adenine N(6)-methyltransferase family. RsmA subfamily.

It is found in the cytoplasm. It carries out the reaction adenosine(1518)/adenosine(1519) in 16S rRNA + 4 S-adenosyl-L-methionine = N(6)-dimethyladenosine(1518)/N(6)-dimethyladenosine(1519) in 16S rRNA + 4 S-adenosyl-L-homocysteine + 4 H(+). In terms of biological role, specifically dimethylates two adjacent adenosines (A1518 and A1519) in the loop of a conserved hairpin near the 3'-end of 16S rRNA in the 30S particle. May play a critical role in biogenesis of 30S subunits. The protein is Ribosomal RNA small subunit methyltransferase A of Prochlorococcus marinus (strain MIT 9303).